A 465-amino-acid chain; its full sequence is Glutathione reductase (465 aa).

FAD-binding residues include Ser-16 and Gly-17. Residue Ser-16 coordinates glutathione. Residue Arg-23 coordinates glutathione. The FAD site is built by Glu-42, Thr-49, Cys-50, and Lys-58. An intrachain disulfide couples Cys-50 to Cys-55. Tyr-108 lines the glutathione pocket. Gly-124 lines the FAD pocket. Residues Ala-187, Ile-190, Glu-193, Arg-210, Arg-216, and Gly-276 each contribute to the NADP(+) site. Residue Asp-318 coordinates FAD. Leu-324 serves as a coordination point for NADP(+). Thr-326 provides a ligand contact to FAD. Arg-334 serves as a coordination point for glutathione. An NADP(+)-binding site is contributed by Val-357. FAD is bound at residue His-454. His-454 (proton acceptor) is an active-site residue.

It belongs to the class-I pyridine nucleotide-disulfide oxidoreductase family. FAD serves as cofactor.

The protein localises to the cytoplasm. The enzyme catalyses 2 glutathione + NADP(+) = glutathione disulfide + NADPH + H(+). Catalyzes the reduction of glutathione disulfide (GSSG) to reduced glutathione (GSH). Constitutes the major mechanism to maintain a high GSH:GSSG ratio in the cytosol. The amount of GSH may affect the determination of cell fate. The chain is Glutathione reductase (gsr) from Dictyostelium discoideum (Social amoeba).